Consider the following 105-residue polypeptide: Thioredoxin (105 aa).

One can recognise a Thioredoxin domain in the interval 1 to 105 (MVNNVTDISF…SLLDWINKSI (105 aa)). C30 and C33 are disulfide-bonded.

The protein belongs to the thioredoxin family.

Its function is as follows. Component of the thioredoxin-thioredoxin reductase system. Participates in various redox reactions through the reversible oxidation of its active center dithiol to a disulfide and catalyzes dithiol-disulfide exchange reactions. In Rickettsia typhi (strain ATCC VR-144 / Wilmington), this protein is Thioredoxin (trxA).